Here is a 311-residue protein sequence, read N- to C-terminus: Long form salivary protein D7L1 (311 aa).

The signal sequence occupies residues 1 to 16 (MKALIFLGAIIAGVLS). 2 cysteine pairs are disulfide-bonded: C34-C67 and C63-C120. S146, R149, Y153, and K160 together coordinate ADP. 3 disulfide bridges follow: C170-C202, C183-C311, and C244-C258. 3 residues coordinate ADP: N281, Y282, and S283.

This sequence belongs to the PBP/GOBP family. Distal lateral and medial lobes of female mosquito salivary gland (at protein level). Expressed in the head and thorax of the female mosquitoes, where the salivary glands are located. Expressed in salivary gland. Not detected in the female mosquito abdomen. Not detected in the male mosquito tissues.

The protein localises to the secreted. Modulates blood feeding of female mosquitoes on vertebrate species by binding and sequestering different mediators involved in the host response. Binds adenine, adenosine, AMP, ADP and ATP, with the highest affinity to ATP and ADP. Inhibits agonist-induced platelet aggregation and hemostasis. This chain is Long form salivary protein D7L1, found in Culex quinquefasciatus (Southern house mosquito).